Here is a 728-residue protein sequence, read N- to C-terminus: MDKTQSSQGKCPVMHGANSAVASNNMDWWPKALNLDILHQHDKKTDPMDPKFNYREAFNSLDLAAVKRDLNALMTDSQDWWPADWGHYGGLMIRMAWHSAGTYRVADGRGGAGTGNQRFAPLNSWPDNANLDKARRLLWPIKKKYGNKLSWADLMILAGNVAYESMGLKTYGFAGGREDIWHPEKDIYWGSEKQWLAPTENPNSRYSGERDLENPLAAVMMGLIYVNPEGVDGKPDPLRTAQDVRVTFARMAMNDEETVALTAGGHTVGKCHGNGKAQDLGPEPEGEELEAQGLGWLNKKGPGTGANAVTSGLEGAWTTHPTQWDNGYFHLLLNYDWELKKSPAGASQWEPINIKEEDKVVSVGDPNRKFNPIMTDADMAMKMDPEYRKISEKFYQDPAYFSEVFARAWFKLTHRDLGPKSRYLGPEVPNEDLLWQDPIPSVDYRLDASEIVDLKAKLLASGLSVSELVATAWDSARTFRGSDFRGGANGARIRLAPQKDWQANEPERLQKVLKVLTELQASLSKKVSIADLIVLGGAAAIEKAAHEAGVKVTVPFIPGRGDATQEMTDVESFAVLEPLHDAYRNWQKKDYVVQPEEMMLDRTQLMGLTAHEMTVLVGGMRVLGTNYGGTRHGVFTDKVGVLTNDFFVNLTDMAYNWKPAGSNLYQIVERKTGAVKWTASRVDLVFGSNSILRAYAEMYAQDDAKEKFVHDFVAAWTKVMNADRFDLA.

The N-terminal stretch at 1–22 is a signal peptide; that stretch reads MDKTQSSQGKCPVMHGANSAVA. Positions 97–225 form a cross-link, tryptophyl-tyrosyl-methioninium (Trp-Tyr) (with M-251); that stretch reads WHSAGTYRVA…LAAVMMGLIY (129 aa). His98 functions as the Proton acceptor in the catalytic mechanism. The tryptophyl-tyrosyl-methioninium (Tyr-Met) (with W-97) cross-link spans 225–251; sequence YVNPEGVDGKPDPLRTAQDVRVTFARM. His266 provides a ligand contact to heme b.

This sequence belongs to the peroxidase family. Peroxidase/catalase subfamily. As to quaternary structure, homodimer or homotetramer. Requires heme b as cofactor. Post-translationally, formation of the three residue Trp-Tyr-Met cross-link is important for the catalase, but not the peroxidase activity of the enzyme.

The enzyme catalyses H2O2 + AH2 = A + 2 H2O. It carries out the reaction 2 H2O2 = O2 + 2 H2O. In terms of biological role, bifunctional enzyme with both catalase and broad-spectrum peroxidase activity. In Shewanella sp. (strain MR-7), this protein is Catalase-peroxidase 1.